The following is a 424-amino-acid chain: Enolase (424 aa).

A (2R)-2-phosphoglycerate-binding site is contributed by glutamine 162. Residue glutamate 204 is the Proton donor of the active site. Mg(2+) contacts are provided by aspartate 241, glutamate 284, and aspartate 311. Lysine 336, arginine 365, serine 366, and lysine 387 together coordinate (2R)-2-phosphoglycerate. The active-site Proton acceptor is lysine 336.

This sequence belongs to the enolase family. The cofactor is Mg(2+).

The protein resides in the cytoplasm. It localises to the secreted. It is found in the cell surface. The catalysed reaction is (2R)-2-phosphoglycerate = phosphoenolpyruvate + H2O. It functions in the pathway carbohydrate degradation; glycolysis; pyruvate from D-glyceraldehyde 3-phosphate: step 4/5. Functionally, catalyzes the reversible conversion of 2-phosphoglycerate (2-PG) into phosphoenolpyruvate (PEP). It is essential for the degradation of carbohydrates via glycolysis. The protein is Enolase of Parvibaculum lavamentivorans (strain DS-1 / DSM 13023 / NCIMB 13966).